The primary structure comprises 366 residues: Aminomethyltransferase (366 aa).

The protein belongs to the GcvT family. In terms of assembly, the glycine cleavage system is composed of four proteins: P, T, L and H.

The enzyme catalyses N(6)-[(R)-S(8)-aminomethyldihydrolipoyl]-L-lysyl-[protein] + (6S)-5,6,7,8-tetrahydrofolate = N(6)-[(R)-dihydrolipoyl]-L-lysyl-[protein] + (6R)-5,10-methylene-5,6,7,8-tetrahydrofolate + NH4(+). In terms of biological role, the glycine cleavage system catalyzes the degradation of glycine. The protein is Aminomethyltransferase of Bordetella avium (strain 197N).